The following is a 354-amino-acid chain: DnaJ homolog shv (354 aa).

A signal peptide spans Met1 to Ala22. Positions Asp25–Gly90 constitute a J domain. N-linked (GlcNAc...) asparagine glycans are attached at residues Asn260 and Asn312.

As to expression, in the testes, detected at low levels in somatic hub cells, cyst stem cells and the apical tip (at protein level). Levels in the testes decrease with age (at protein level). Expressed at low levels in hub cells, cyst stem cells and germline stem cells, and at high levels in spermatocytes and cyst cells.

Its subcellular location is the nucleus. It localises to the cell membrane. It is found in the secreted. Its function is as follows. Maintains stem cell niche architecture in the testes. Activates an extracellular integrin beta-PS pathway which regulates DE-cadherin (shg) levels in somatic hub cells, and is essential for maintaining the number of germline stem cells and the structure and localization of hub cells. This chain is DnaJ homolog shv, found in Drosophila melanogaster (Fruit fly).